A 191-amino-acid chain; its full sequence is Dephospho-CoA kinase (191 aa).

One can recognise a DPCK domain in the interval 3 to 191 (AIGITGSYAS…KLILVIARKL (189 aa)). An ATP-binding site is contributed by 11-16 (ASGKTF).

It belongs to the CoaE family.

Its subcellular location is the cytoplasm. The enzyme catalyses 3'-dephospho-CoA + ATP = ADP + CoA + H(+). The protein operates within cofactor biosynthesis; coenzyme A biosynthesis; CoA from (R)-pantothenate: step 5/5. Catalyzes the phosphorylation of the 3'-hydroxyl group of dephosphocoenzyme A to form coenzyme A. In Rickettsia felis (strain ATCC VR-1525 / URRWXCal2) (Rickettsia azadi), this protein is Dephospho-CoA kinase.